Here is a 288-residue protein sequence, read N- to C-terminus: Ice-binding protein (288 aa).

Positions 1–22 (MFSTTLINTFSLGLLAVVSVVA) are cleaved as a signal peptide. 2 short sequence motifs (ice-binding site motif (T-A/G-X-T/N)) span residues 75-78 (TAGN) and 154-157 (TAFN). Asparagine 194 carries an N-linked (GlcNAc...) asparagine glycan. 2 short sequence motifs (ice-binding site motif (T-A/G-X-T/N)) span residues 196-199 (TGVT) and 265-268 (TGAT).

It belongs to the ice-binding protein family.

It localises to the secreted. Binds ice crystals and most probably inhibits their growth in order to prevent cell damage from extracellular ice. The polypeptide is Ice-binding protein (Lentinula edodes (Shiitake mushroom)).